We begin with the raw amino-acid sequence, 297 residues long: HTH-type transcriptional regulator ArgP (297 aa).

The HTH lysR-type domain occupies 4 to 60 (PDYRTLQALDAVIRERGFERAAQKLCITQSAVSQRIKQLENMFGQPLLVRTVPPRPT). Residues 21–40 (FERAAQKLCITQSAVSQRIK) constitute a DNA-binding region (H-T-H motif).

The protein belongs to the LysR transcriptional regulatory family. In terms of assembly, homodimer.

Its function is as follows. Controls the transcription of genes involved in arginine and lysine metabolism. In Escherichia fergusonii (strain ATCC 35469 / DSM 13698 / CCUG 18766 / IAM 14443 / JCM 21226 / LMG 7866 / NBRC 102419 / NCTC 12128 / CDC 0568-73), this protein is HTH-type transcriptional regulator ArgP.